The following is a 156-amino-acid chain: Envelope glycoprotein L (156 aa).

The N-terminal stretch at 1 to 16 (MSPLVAVLVFFSAALG) is a signal peptide. Residues 21 to 141 (GVAGNPHGLD…KELGEVAVHK (121 aa)) form an interaction with gH region. The gL alphaherpesvirus-type domain maps to 50 to 156 (ELEWDDEDHP…LRYNGGPPAE (107 aa)). Cys-71 and Cys-95 form a disulfide bridge.

This sequence belongs to the herpesviridae glycoprotein L (gL) family. Alphaherpesvirinae gL subfamily. As to quaternary structure, interacts with glycoprotein H (gH); this interaction is necessary for the correct processing and cell surface expression of gH. The heterodimer gH/gL seems to interact with gB trimers during fusion. O-glycosylated, and sialylated.

It is found in the virion membrane. The protein resides in the host cell membrane. The protein localises to the host Golgi apparatus. It localises to the host trans-Golgi network. In terms of biological role, the heterodimer glycoprotein H-glycoprotein L is required for the fusion of viral and plasma membranes leading to virus entry into the host cell. Acts as a functional inhibitor of gH and maintains gH in an inhibited form. Upon binding to host integrins, gL dissociates from gH leading to activation of the viral fusion glycoproteins gB and gH. The protein is Envelope glycoprotein L of Sus scrofa (Pig).